Here is a 434-residue protein sequence, read N- to C-terminus: Probable G-protein coupled receptor 150 (434 aa).

The Extracellular segment spans residues 1–3 (MED). A helical transmembrane segment spans residues 4-24 (LFSPSILPPAPNISVPILLGW). Topologically, residues 25–43 (GLNLTLGQGAPASGPPSRR) are cytoplasmic. Residues 44 to 64 (VRLVFLGVILVVAVAGNTTVL) form a helical membrane-spanning segment. Topologically, residues 65-81 (CRLCGGGGPWAGPKRRK) are extracellular. The helical transmembrane segment at 82–102 (MDFLLVQLALADLYACGGTAL) threads the bilayer. Residues 103–162 (SQLAWELLGEPRAATGDLACRFLQLLQASGRGASAHLVVLIALERRRAVRLPHGRPLPAR) lie on the Cytoplasmic side of the membrane. Residues 163-183 (ALAALGWLLALLLALPPAFVV) form a helical membrane-spanning segment. The Extracellular segment spans residues 184-237 (RGDSPSPLPPPPPPTSLQPGAPPAARAWPGERRCHGIFAPLPRWHLQVYAFYEA). Positions 188–210 (PSPLPPPPPPTSLQPGAPPAARA) are disordered. The span at 189–205 (SPLPPPPPPTSLQPGAP) shows a compositional bias: pro residues. The helical transmembrane segment at 238–258 (VAGFVAPVTVLGVACGHLLSV) threads the bilayer. The Cytoplasmic portion of the chain corresponds to 259–293 (WWRHRPQAPAAAAPWSASPGRAPAPSALPRAKVQS). Residues 294-314 (LKMSLLLALLFVGCELPYFAA) traverse the membrane as a helical segment. Residues 315 to 334 (RLAAAWSSGPAGDWEGEGLS) are Extracellular-facing. The chain crosses the membrane as a helical span at residues 335 to 355 (AALRVVAMANSALNPFVYLFF). The Cytoplasmic portion of the chain corresponds to 356 to 434 (QAGDCRLRRQ…PLPCSCESAF (79 aa)). Residues 398 to 407 (WPHPHYHHAR) show a composition bias toward basic residues. The disordered stretch occupies residues 398–434 (WPHPHYHHARREPLDEGGLRPPPPRPRPLPCSCESAF). Pro residues predominate over residues 417 to 426 (RPPPPRPRPL).

It belongs to the G-protein coupled receptor 1 family.

The protein localises to the cell membrane. Its function is as follows. Orphan receptor. This is Probable G-protein coupled receptor 150 (GPR150) from Homo sapiens (Human).